Reading from the N-terminus, the 500-residue chain is UBX domain-containing protein 5 (500 aa).

Residues 50–61 show a composition bias toward low complexity; it reads SNNTPTPSNSTP. Residues 50–70 form a disordered region; that stretch reads SNNTPTPSNSTPMAPTSVDSD. The residue at position 139 (Ser139) is a Phosphoserine. Disordered stretches follow at residues 142-169 and 371-399; these read NQRLDDTNTNTYINDNSSDSLDSEEEND and ESLNNNSSKSNQEEVPSTGEEQKRVQEPD. Positions 148 to 161 are enriched in low complexity; that stretch reads TNTNTYINDNSSDS. The region spanning 415–493 is the UBX domain; it reads KPGITTRIQI…GLKNSSLLLE (79 aa).

As to quaternary structure, interacts with CDC48.

It is found in the nucleus. The protein localises to the cytoplasm. Its function is as follows. Involved in CDC48-dependent protein degradation through the ubiquitin/proteasome pathway. This chain is UBX domain-containing protein 5 (UBX5), found in Saccharomyces cerevisiae (strain ATCC 204508 / S288c) (Baker's yeast).